The sequence spans 145 residues: Transcription antitermination protein NusB (145 aa).

The protein belongs to the NusB family.

In terms of biological role, involved in transcription antitermination. Required for transcription of ribosomal RNA (rRNA) genes. Binds specifically to the boxA antiterminator sequence of the ribosomal RNA (rrn) operons. The polypeptide is Transcription antitermination protein NusB (Geotalea uraniireducens (strain Rf4) (Geobacter uraniireducens)).